A 204-amino-acid chain; its full sequence is Thymidylate kinase (204 aa).

Residue 10–17 (GGDGAGKT) coordinates ATP.

Belongs to the thymidylate kinase family.

The enzyme catalyses dTMP + ATP = dTDP + ADP. Functionally, phosphorylation of dTMP to form dTDP in both de novo and salvage pathways of dTTP synthesis. This is Thymidylate kinase from Cutibacterium acnes (strain DSM 16379 / KPA171202) (Propionibacterium acnes).